Here is a 195-residue protein sequence, read N- to C-terminus: Guanylate kinase (195 aa).

The Guanylate kinase-like domain maps to 12-191; that stretch reads GLIILISGPS…TIEDIKQLIL (180 aa). 19–26 provides a ligand contact to ATP; sequence GPSGVGKG.

The protein belongs to the guanylate kinase family.

It is found in the cytoplasm. It catalyses the reaction GMP + ATP = GDP + ADP. Essential for recycling GMP and indirectly, cGMP. In Mycoplasmoides gallisepticum (strain R(low / passage 15 / clone 2)) (Mycoplasma gallisepticum), this protein is Guanylate kinase (gmk).